The following is a 445-amino-acid chain: 3-phosphoshikimate 1-carboxyvinyltransferase (445 aa).

Residues lysine 21, serine 22, and arginine 26 each contribute to the 3-phosphoshikimate site. Lysine 21 provides a ligand contact to phosphoenolpyruvate. Phosphoenolpyruvate-binding residues include glycine 92 and arginine 120. Positions 165, 166, 307, and 334 each coordinate 3-phosphoshikimate. Glutamine 166 is a binding site for phosphoenolpyruvate. Aspartate 307 functions as the Proton acceptor in the catalytic mechanism. Phosphoenolpyruvate is bound by residues arginine 338, arginine 379, and lysine 405.

It belongs to the EPSP synthase family. As to quaternary structure, monomer.

The protein localises to the cytoplasm. It catalyses the reaction 3-phosphoshikimate + phosphoenolpyruvate = 5-O-(1-carboxyvinyl)-3-phosphoshikimate + phosphate. It functions in the pathway metabolic intermediate biosynthesis; chorismate biosynthesis; chorismate from D-erythrose 4-phosphate and phosphoenolpyruvate: step 6/7. Its function is as follows. Catalyzes the transfer of the enolpyruvyl moiety of phosphoenolpyruvate (PEP) to the 5-hydroxyl of shikimate-3-phosphate (S3P) to produce enolpyruvyl shikimate-3-phosphate and inorganic phosphate. This chain is 3-phosphoshikimate 1-carboxyvinyltransferase, found in Chlamydia pneumoniae (Chlamydophila pneumoniae).